Here is a 246-residue protein sequence, read N- to C-terminus: Allergin-1 (246 aa).

The N-terminal stretch at 1–33 (MGDGDSPMCLSAVSFKGIRCWLDKLLLWALTIS) is a signal peptide. Topologically, residues 34–150 (ITLQNAAVDC…DESCPSCRLS (117 aa)) are extracellular. The Ig-like C2-type domain maps to 52–131 (PSPNLNSSMN…VNVSNLMKYS (80 aa)). Asparagine 68 is a glycosylation site (N-linked (GlcNAc...) asparagine). A disulfide bond links cysteine 73 and cysteine 120. The chain crosses the membrane as a helical span at residues 151 to 171 (LLLPGLLLGILVIVLVLAYLI). Over 172–246 (HLKYKKGKKT…ADYIYSELTH (75 aa)) the chain is Cytoplasmic. 2 consecutive short sequence motifs (ITIM motif) follow at residues 214-219 (IHYATP) and 239-244 (YIYSEL). Phosphotyrosine is present on residues tyrosine 216 and tyrosine 241.

As to quaternary structure, monomer. Interacts (tyrosine-phosphorylated) with PTPN6, PTPN11 and INPP5D. N-glycosylated. Expressed in myeloid cells (dendritic cells, macrophages and neutrophils but not in T-cells, B-cells or natural killer cells) and mast cells (at protein level).

Its subcellular location is the cell membrane. The protein localises to the secreted. Its function is as follows. Immunoglobulin-like receptor which plays an inhibitory role in degranulation of mast cells. Negatively regulates IgE-mediated mast cell activation and suppresses the type I immediate hypersensitivity reaction. The chain is Allergin-1 (Milr1) from Mus musculus (Mouse).